Consider the following 86-residue polypeptide: Protein Tat (86 aa).

A disordered region spans residues 1–21 (MDPVDPNIEPWNHPGSQPKTA). The tract at residues 1–24 (MDPVDPNIEPWNHPGSQPKTACNR) is interaction with human CREBBP. The transactivation stretch occupies residues 1 to 48 (MDPVDPNIEPWNHPGSQPKTACNRCHCKKCCYHCQVCFITKGLGISYG). Positions 22, 25, and 27 each coordinate Zn(2+). The cysteine-rich stretch occupies residues 22-37 (CNRCHCKKCCYHCQVC). The residue at position 28 (Lys-28) is an N6-acetyllysine; by host PCAF. Zn(2+)-binding residues include Cys-30, His-33, Cys-34, and Cys-37. The segment at 38–48 (FITKGLGISYG) is core. Positions 47-86 (YGRKKRRQRRRPSQGGQTHQDPIPKQPSSQPRGDPTGPKE) are disordered. The segment covering 48 to 58 (GRKKRRQRRRP) has biased composition (basic residues). The Nuclear localization signal, RNA-binding (TAR), and protein transduction signature appears at 49 to 57 (RKKRRQRRR). The segment at 49–86 (RKKRRQRRRPSQGGQTHQDPIPKQPSSQPRGDPTGPKE) is interaction with the host capping enzyme RNGTT. Residues Lys-50 and Lys-51 each carry the N6-acetyllysine; by host EP300 and GCN5L2 modification. Residues Arg-52 and Arg-53 each carry the asymmetric dimethylarginine; by host PRMT6 modification. Positions 60-77 (QGGQTHQDPIPKQPSSQP) are enriched in polar residues. Lys-71 participates in a covalent cross-link: Glycyl lysine isopeptide (Lys-Gly) (interchain with G-Cter in ubiquitin). The Cell attachment site motif lies at 78-80 (RGD).

It belongs to the lentiviruses Tat family. As to quaternary structure, interacts with host CCNT1. Associates with the P-TEFb complex composed at least of Tat, P-TEFb (CDK9 and CCNT1), TAR RNA, RNA Pol II. Recruits the HATs CREBBP, TAF1/TFIID, EP300, PCAF and GCN5L2. Interacts with host KAT5/Tip60; this interaction targets the latter to degradation. Interacts with the host deacetylase SIRT1. Interacts with host capping enzyme RNGTT; this interaction stimulates RNGTT. Binds to host KDR, and to the host integrins ITGAV/ITGB3 and ITGA5/ITGB1. Interacts with host KPNB1/importin beta-1 without previous binding to KPNA1/importin alpha-1. Interacts with EIF2AK2. Interacts with host nucleosome assembly protein NAP1L1; this interaction may be required for the transport of Tat within the nucleus, since the two proteins interact at the nuclear rim. Interacts with host C1QBP/SF2P32; this interaction involves lysine-acetylated Tat. Interacts with the host chemokine receptors CCR2, CCR3 and CXCR4. Interacts with host DPP4/CD26; this interaction may trigger an anti-proliferative effect. Interacts with host LDLR. Interacts with the host extracellular matrix metalloproteinase MMP1. Interacts with host PRMT6; this interaction mediates Tat's methylation. Interacts with, and is ubiquitinated by MDM2/Hdm2. Interacts with host PSMC3 and HTATIP2. Interacts with STAB1; this interaction may overcome SATB1-mediated repression of IL2 and IL2RA (interleukin) in T cells by binding to the same domain than HDAC1. Interacts (when acetylated) with human CDK13, thereby increasing HIV-1 mRNA splicing and promoting the production of the doubly spliced HIV-1 protein Nef. Interacts with host TBP; this interaction modulates the activity of transcriptional pre-initiation complex. Interacts with host RELA. Interacts with host PLSCR1; this interaction negatively regulates Tat transactivation activity by altering its subcellular distribution. In terms of processing, asymmetrical arginine methylation by host PRMT6 seems to diminish the transactivation capacity of Tat and affects the interaction with host CCNT1. Acetylation by EP300, CREBBP, GCN5L2/GCN5 and PCAF regulates the transactivation activity of Tat. EP300-mediated acetylation of Lys-50 promotes dissociation of Tat from the TAR RNA through the competitive binding to PCAF's bromodomain. In addition, the non-acetylated Tat's N-terminus can also interact with PCAF. PCAF-mediated acetylation of Lys-28 enhances Tat's binding to CCNT1. Lys-50 is deacetylated by SIRT1. Post-translationally, polyubiquitination by host MDM2 does not target Tat to degradation, but activates its transactivation function and fosters interaction with CCNT1 and TAR RNA. In terms of processing, phosphorylated by EIF2AK2 on serine and threonine residues adjacent to the basic region important for TAR RNA binding and function. Phosphorylation of Tat by EIF2AK2 is dependent on the prior activation of EIF2AK2 by dsRNA.

The protein resides in the host nucleus. The protein localises to the host nucleolus. It localises to the host cytoplasm. It is found in the secreted. Functionally, transcriptional activator that increases RNA Pol II processivity, thereby increasing the level of full-length viral transcripts. Recognizes a hairpin structure at the 5'-LTR of the nascent viral mRNAs referred to as the transactivation responsive RNA element (TAR) and recruits the cyclin T1-CDK9 complex (P-TEFb complex) that will in turn hyperphosphorylate the RNA polymerase II to allow efficient elongation. The CDK9 component of P-TEFb and other Tat-activated kinases hyperphosphorylate the C-terminus of RNA Pol II that becomes stabilized and much more processive. Other factors such as HTATSF1/Tat-SF1, SUPT5H/SPT5, and HTATIP2 are also important for Tat's function. Besides its effect on RNA Pol II processivity, Tat induces chromatin remodeling of proviral genes by recruiting the histone acetyltransferases (HATs) CREBBP, EP300 and PCAF to the chromatin. This also contributes to the increase in proviral transcription rate, especially when the provirus integrates in transcriptionally silent region of the host genome. To ensure maximal activation of the LTR, Tat mediates nuclear translocation of NF-kappa-B by interacting with host RELA. Through its interaction with host TBP, Tat may also modulate transcription initiation. Tat can reactivate a latently infected cell by penetrating in it and transactivating its LTR promoter. In the cytoplasm, Tat is thought to act as a translational activator of HIV-1 mRNAs. Its function is as follows. Extracellular circulating Tat can be endocytosed by surrounding uninfected cells via the binding to several surface receptors such as CD26, CXCR4, heparan sulfate proteoglycans (HSPG) or LDLR. Neurons are rarely infected, but they internalize Tat via their LDLR. Through its interaction with nuclear HATs, Tat is potentially able to control the acetylation-dependent cellular gene expression. Modulates the expression of many cellular genes involved in cell survival, proliferation or in coding for cytokines or cytokine receptors. Tat plays a role in T-cell and neurons apoptosis. Tat induced neurotoxicity and apoptosis probably contribute to neuroAIDS. Circulating Tat also acts as a chemokine-like and/or growth factor-like molecule that binds to specific receptors on the surface of the cells, affecting many cellular pathways. In the vascular system, Tat binds to ITGAV/ITGB3 and ITGA5/ITGB1 integrins dimers at the surface of endothelial cells and competes with bFGF for heparin-binding sites, leading to an excess of soluble bFGF. The sequence is that of Protein Tat from Human immunodeficiency virus type 1 group M subtype D (isolate Z2/CDC-Z34) (HIV-1).